An 851-amino-acid polypeptide reads, in one-letter code: M-phase phosphoprotein 8 (851 aa).

The tract at residues 21 to 54 is disordered; the sequence is NIGRSPEVEGGGAAGEEKDAATKGTVAVGDSEED. A phosphoserine mark is found at S51, S85, and S136. A Chromo domain is found at 59–118; the sequence is FEVERILDMKCEGGKNLYKVRWKGYTSDDDTWEPEVHLEDCKEVLLEFRKKVAENKAKAV. Residues 80–87 form a histone H3K9me3 binding region; it reads WKGYTSDD. The interval 133 to 174 is disordered; it reads EADSDIDQQGDTKEDTSPRKKKKKIKYKEDKSPDDLRKKRAK. T144 is subject to Phosphothreonine. S149 and S164 each carry phosphoserine; by CDK1. A compositionally biased stretch (basic and acidic residues) spans 159–169; that stretch reads YKEDKSPDDLR. Residues S188, S263, S267, and S274 each carry the phosphoserine modification. Residues 240 to 302 form a disordered region; sequence REDVKDNRKT…KTGQDTVQES (63 aa). The segment covering 269-278 has biased composition (acidic residues); the sequence is TLEDESEDFL. The span at 279–295 shows a compositional bias: basic and acidic residues; it reads SDNKEKQNVRTAKDKTG. The residue at position 313 (S313) is a Phosphoserine. Residues 315 to 428 are disordered; sequence EEAGTRVRRK…DKEEKARKEP (114 aa). Basic and acidic residues predominate over residues 329 to 364; that stretch reads RKFEEPKEIKKLENTNNFLERKMIPKKQRNQDKGRS. T379 carries the post-translational modification Phosphothreonine; by CDK1. S386 and S394 each carry phosphoserine. Over residues 401–428 the composition is skewed to basic and acidic residues; the sequence is EKERKNEPKEKYQKRYDFDKEEKARKEP. The residue at position 447 (T447) is a Phosphothreonine. 4 ANK repeats span residues 591-620, 624-653, 657-686, and 690-719; these read TGMTLVMLAAAGGQDDLLRLLITKGAKVNG, NGTTALIHAAEKNFLTTVAILLEAGAFVNV, NGETALMKACKRGNSDIVRLVIECGADCNI, and HQNSALYFAKQCNNVLVYELLKSHLETLSR.

In terms of assembly, homodimer. Interacts (via chromo domain) with histone H3K9me3. Has the highest affinity for H3K9me3, and lesser affinity for H3K9me2 and H3K9me1. Component of the HUSH complex; at least composed of TASOR, PPHLN1 and MPHOSPH8. Interacts with DNMT3, EHMT1 and SETDB1. Interacts with MORC2; the interaction associateS MORC2 with the HUSH complex which recruits MORC2 to heterochromatic loci. Interacts with ZNF638; leading to recruitment of the HUSH complex to unintegrated retroviral DNA. Interacts with TASOR. Post-translationally, phosphorylated in M (mitotic) phase. Phosphorylation by CDK1 promotes dissociation from chromatin.

It is found in the nucleus. It localises to the chromosome. Its function is as follows. Heterochromatin component that specifically recognizes and binds methylated 'Lys-9' of histone H3 (H3K9me) and promotes recruitment of proteins that mediate epigenetic repression. Mediates recruitment of the HUSH complex to H3K9me3 sites: the HUSH complex is recruited to genomic loci rich in H3K9me3 and is required to maintain transcriptional silencing by promoting recruitment of SETDB1, a histone methyltransferase that mediates further deposition of H3K9me3, as well as MORC2. Binds H3K9me and promotes DNA methylation by recruiting DNMT3A to target CpG sites; these can be situated within the coding region of the gene. Mediates down-regulation of CDH1 expression. Also represses L1 retrotransposons in collaboration with MORC2 and, probably, SETDB1, the silencing is dependent of repressive epigenetic modifications, such as H3K9me3 mark. Silencing events often occur within introns of transcriptionally active genes, and lead to the down-regulation of host gene expression. The HUSH complex is also involved in the silencing of unintegrated retroviral DNA by being recruited by ZNF638: some part of the retroviral DNA formed immediately after infection remains unintegrated in the host genome and is transcriptionally repressed. This Rattus norvegicus (Rat) protein is M-phase phosphoprotein 8.